Here is a 152-residue protein sequence, read N- to C-terminus: UPF0225 protein Ent638_2310 (152 aa).

The protein belongs to the UPF0225 family.

The sequence is that of UPF0225 protein Ent638_2310 from Enterobacter sp. (strain 638).